The chain runs to 265 residues: Sulfur carrier protein FdhD (265 aa).

Residue Cys107 is the Cysteine persulfide intermediate of the active site.

This sequence belongs to the FdhD family.

The protein localises to the cytoplasm. Functionally, required for formate dehydrogenase (FDH) activity. Acts as a sulfur carrier protein that transfers sulfur from IscS to the molybdenum cofactor prior to its insertion into FDH. This chain is Sulfur carrier protein FdhD, found in Staphylococcus aureus (strain NCTC 8325 / PS 47).